A 179-amino-acid polypeptide reads, in one-letter code: Ribosome maturation factor RimM (179 aa).

Residues 98 to 170 (PDEFWDRRLR…RIVVSGIPGL (73 aa)) form the PRC barrel domain.

The protein belongs to the RimM family. In terms of assembly, binds ribosomal protein uS19.

It localises to the cytoplasm. An accessory protein needed during the final step in the assembly of 30S ribosomal subunit, possibly for assembly of the head region. Essential for efficient processing of 16S rRNA. May be needed both before and after RbfA during the maturation of 16S rRNA. It has affinity for free ribosomal 30S subunits but not for 70S ribosomes. This is Ribosome maturation factor RimM from Cutibacterium acnes (strain DSM 16379 / KPA171202) (Propionibacterium acnes).